The sequence spans 570 residues: Proline--tRNA ligase (570 aa).

It belongs to the class-II aminoacyl-tRNA synthetase family. ProS type 1 subfamily. As to quaternary structure, homodimer.

It is found in the cytoplasm. It carries out the reaction tRNA(Pro) + L-proline + ATP = L-prolyl-tRNA(Pro) + AMP + diphosphate. Catalyzes the attachment of proline to tRNA(Pro) in a two-step reaction: proline is first activated by ATP to form Pro-AMP and then transferred to the acceptor end of tRNA(Pro). As ProRS can inadvertently accommodate and process non-cognate amino acids such as alanine and cysteine, to avoid such errors it has two additional distinct editing activities against alanine. One activity is designated as 'pretransfer' editing and involves the tRNA(Pro)-independent hydrolysis of activated Ala-AMP. The other activity is designated 'posttransfer' editing and involves deacylation of mischarged Ala-tRNA(Pro). The misacylated Cys-tRNA(Pro) is not edited by ProRS. This is Proline--tRNA ligase from Wolinella succinogenes (strain ATCC 29543 / DSM 1740 / CCUG 13145 / JCM 31913 / LMG 7466 / NCTC 11488 / FDC 602W) (Vibrio succinogenes).